Here is a 201-residue protein sequence, read N- to C-terminus: Cytochrome c oxidase assembly protein CtaG (201 aa).

Over 1-12 (MTDQGENEKKQR) the chain is Cytoplasmic. Residues 13 to 35 (RSNATIAVACLSFFVCMIGAAYA) traverse the membrane as a helical; Signal-anchor for type II membrane protein segment. The Periplasmic portion of the chain corresponds to 36 to 201 (SVPLYRIFCQ…KAVGSTRNGG (166 aa)).

This sequence belongs to the COX11/CtaG family.

It localises to the cell inner membrane. Functionally, exerts its effect at some terminal stage of cytochrome c oxidase synthesis, probably by being involved in the insertion of the copper B into subunit I. This chain is Cytochrome c oxidase assembly protein CtaG, found in Brucella suis biovar 1 (strain 1330).